Reading from the N-terminus, the 161-residue chain is 6,7-dimethyl-8-ribityllumazine synthase (161 aa).

5-amino-6-(D-ribitylamino)uracil-binding positions include Trp-31, 63–65 (SFE), and 85–87 (VVI). 90–91 (GT) contributes to the (2S)-2-hydroxy-3-oxobutyl phosphate binding site. The active-site Proton donor is His-93. Residue Phe-118 coordinates 5-amino-6-(D-ribitylamino)uracil. Arg-132 lines the (2S)-2-hydroxy-3-oxobutyl phosphate pocket.

The protein belongs to the DMRL synthase family.

It catalyses the reaction (2S)-2-hydroxy-3-oxobutyl phosphate + 5-amino-6-(D-ribitylamino)uracil = 6,7-dimethyl-8-(1-D-ribityl)lumazine + phosphate + 2 H2O + H(+). The protein operates within cofactor biosynthesis; riboflavin biosynthesis; riboflavin from 2-hydroxy-3-oxobutyl phosphate and 5-amino-6-(D-ribitylamino)uracil: step 1/2. Its function is as follows. Catalyzes the formation of 6,7-dimethyl-8-ribityllumazine by condensation of 5-amino-6-(D-ribitylamino)uracil with 3,4-dihydroxy-2-butanone 4-phosphate. This is the penultimate step in the biosynthesis of riboflavin. This is 6,7-dimethyl-8-ribityllumazine synthase from Arthrobacter sp. (strain FB24).